A 274-amino-acid polypeptide reads, in one-letter code: Large ribosomal subunit protein uL2 (274 aa).

Disordered stretches follow at residues 38–57 (KRTG…VGGG) and 224–256 (AMNP…KGYK). The span at 229–239 (DHPHGGGEGRN) shows a compositional bias: basic and acidic residues.

It belongs to the universal ribosomal protein uL2 family. In terms of assembly, part of the 50S ribosomal subunit. Forms a bridge to the 30S subunit in the 70S ribosome.

One of the primary rRNA binding proteins. Required for association of the 30S and 50S subunits to form the 70S ribosome, for tRNA binding and peptide bond formation. It has been suggested to have peptidyltransferase activity; this is somewhat controversial. Makes several contacts with the 16S rRNA in the 70S ribosome. This chain is Large ribosomal subunit protein uL2, found in Acinetobacter baumannii (strain AB307-0294).